An 82-amino-acid chain; its full sequence is Small ribosomal subunit protein bS16 (82 aa).

The protein belongs to the bacterial ribosomal protein bS16 family.

In Pectobacterium carotovorum subsp. carotovorum (strain PC1), this protein is Small ribosomal subunit protein bS16.